The primary structure comprises 321 residues: Glucokinase (321 aa).

8–13 (GDVGGT) contacts ATP.

This sequence belongs to the bacterial glucokinase family.

It localises to the cytoplasm. The catalysed reaction is D-glucose + ATP = D-glucose 6-phosphate + ADP + H(+). In Salmonella arizonae (strain ATCC BAA-731 / CDC346-86 / RSK2980), this protein is Glucokinase.